A 1990-amino-acid polypeptide reads, in one-letter code: Protein TANC2 (1990 aa).

Disordered regions lie at residues 1–85 and 129–149; these read MFRN…SVDE and SPCSTLTSSTASPPASSPCST. Ser-169, Ser-238, Ser-294, and Ser-400 each carry phosphoserine. The interval 396-442 is disordered; it reads IASDSPHASPKHVDANRELPLTQPPSAHSSITSGSCPGTPEMRRRQE. A compositionally biased stretch (polar residues) spans 419 to 431; the sequence is PPSAHSSITSGSC. ANK repeat units follow at residues 846–878, 884–913, 917–946, 950–979, 990–1019, 1033–1062, 1066–1095, 1099–1128, 1132–1161, 1165–1194, and 1198–1227; these read EGLSMALASLRNLYTPNIKVSRLLILGGANINY, NNAPILCVQSHLGYTEMVALLLEFGANVDA, SGLTPLGYAAAAGYLSIVVLLCKKRAKVDH, NGQCALVHAALRGHLEVVKFLIQCDWTMAG, AIQQALIAAASMGYTEIVSYLLDLPEKDEE, WGETALTAAAGRGKLEVCRLLLEQGAAVAQ, RGAVPLFSTVRQGHWQIVDLLLTHGADVNM, QGRTPLMMAASEGHLGTVDFLLAQGASIAL, EGLTALSWACLKGHLSVVRSLVDNGAATDH, NGRTPLDLAAFYGDAEVVQFLVDHGAMIEH, and SGMRPLDRAVGCRNTSVVVTLLKKGAKIGP. TPR repeat units follow at residues 1244-1277, 1291-1324, and 1325-1358; these read LSKLMEEGDMFYKKGKVKEAAQRYQYALKKFPRE, VSLLLNLSRCRRKMNDFGMAEEFATKALELKPKS, and YEAYYARARAKRSSRQFAAALEDLNEAIKLCPNN. Disordered regions lie at residues 1372–1401, 1430–1586, and 1692–1718; these read CRQMQQPQQPPPPPQPQQQLPEEAEPEPQH, EARP…KMAQ, and LTKEDLPQRPSSAYRGGVRYSQTPQIG. Phosphoserine is present on residues Ser-1442 and Ser-1458. The span at 1469–1498 shows a compositional bias: polar residues; the sequence is RSSSSVGSPTRQTYQSTSPALSPTHQNSHY. Phosphoserine is present on residues Ser-1530 and Ser-1545. Residues 1553–1572 show a composition bias toward polar residues; the sequence is VYRSQSGSPVRYQQETSVSQ. Residues Arg-1563 and Arg-1576 each carry the asymmetric dimethylarginine modification. Residue Ser-1579 is modified to Phosphoserine. At Ser-1722 the chain carries Phosphoserine. Residues 1783–1798 are compositionally biased toward low complexity; it reads SPSSNSISSTSNLTPT. Disordered regions lie at residues 1783–1803 and 1821–1843; these read SPSSNSISSTSNLTPTFRPSS and DELSPVSPTQGGYPSEPTRSRTT. Residues Ser-1824 and Ser-1827 each carry the phosphoserine modification. Asn-1928 carries N-linked (GlcNAc...) asparagine glycosylation. Residues 1968 to 1990 are disordered; the sequence is SRDSRQGQTSPIKPKRPFVESNV.

The protein belongs to the TANC family. As to quaternary structure, interacts with KIF1A; the interaction decreases in presence of calcium.

It is found in the cell projection. Its subcellular location is the dendritic spine. Scaffolding protein in the dendritic spines which acts as immobile postsynaptic posts able to recruit KIF1A-driven dense core vesicles to dendritic spines. This Homo sapiens (Human) protein is Protein TANC2 (TANC2).